A 79-amino-acid polypeptide reads, in one-letter code: Large ribosomal subunit protein bL31 (79 aa).

Belongs to the bacterial ribosomal protein bL31 family. Type A subfamily. As to quaternary structure, part of the 50S ribosomal subunit.

Functionally, binds the 23S rRNA. This is Large ribosomal subunit protein bL31 from Nostoc sp. (strain PCC 7120 / SAG 25.82 / UTEX 2576).